The sequence spans 137 residues: NADH-quinone oxidoreductase subunit A (137 aa).

3 helical membrane passes run 12–32 (WAFA…LGVS), 68–88 (LVAM…AWAV), and 94–114 (GWVG…GLVY).

Belongs to the complex I subunit 3 family. As to quaternary structure, NDH-1 is composed of 13 different subunits. Subunits NuoA, H, J, K, L, M, N constitute the membrane sector of the complex.

The protein resides in the cell inner membrane. It carries out the reaction a quinone + NADH + 5 H(+)(in) = a quinol + NAD(+) + 4 H(+)(out). In terms of biological role, NDH-1 shuttles electrons from NADH, via FMN and iron-sulfur (Fe-S) centers, to quinones in the respiratory chain. The immediate electron acceptor for the enzyme in this species is believed to be ubiquinone. Couples the redox reaction to proton translocation (for every two electrons transferred, four hydrogen ions are translocated across the cytoplasmic membrane), and thus conserves the redox energy in a proton gradient. This is NADH-quinone oxidoreductase subunit A from Ectopseudomonas mendocina (strain ymp) (Pseudomonas mendocina).